The following is a 512-amino-acid chain: RCC1 domain-containing protein DDB_G0279253 (512 aa).

RCC1 repeat units follow at residues 1–56, 58–134, 135–185, 197–248, 249–319, 321–384, 386–443, and 454–512; these read MKIY…MIID, GDLY…ACDN, NGNI…NNNN, SGGV…ALSS, ENDV…LLDI, FKNV…LLTN, DKLY…IQVY, and NNNI…FILP. Residues 66–77 show a composition bias toward polar residues; the sequence is NDSGQLGINSNE. Disordered stretches follow at residues 66–85 and 162–200; these read NDSG…QQQQ and STSN…SGGV. Residues 162–196 are compositionally biased toward low complexity; that stretch reads STSNNKNNNNNNNNNNNNNNNNNNNNNNNNNNNNN.

The polypeptide is RCC1 domain-containing protein DDB_G0279253 (Dictyostelium discoideum (Social amoeba)).